Reading from the N-terminus, the 394-residue chain is Phosphoglycerate kinase (394 aa).

Residues Asp-21–Asn-23, Arg-36, His-59–Arg-62, Arg-118, and Arg-151 each bind substrate. Ser-183 carries the post-translational modification Phosphoserine. The ATP site is built by Lys-201 and Gly-292. Thr-299 is subject to Phosphothreonine. Residues Glu-323 and Gly-350–Ser-353 each bind ATP.

Belongs to the phosphoglycerate kinase family. Monomer.

The protein resides in the cytoplasm. It carries out the reaction (2R)-3-phosphoglycerate + ATP = (2R)-3-phospho-glyceroyl phosphate + ADP. The protein operates within carbohydrate degradation; glycolysis; pyruvate from D-glyceraldehyde 3-phosphate: step 2/5. The sequence is that of Phosphoglycerate kinase from Bacillus cereus (strain Q1).